The primary structure comprises 199 residues: Thymidine kinase (199 aa).

ATP is bound by residues 9-16 (GAMSSGKT) and 93-96 (DEAQ). The active-site Proton acceptor is Glu-94. Cys-151, Cys-154, Cys-188, and His-191 together coordinate Zn(2+).

The protein belongs to the thymidine kinase family. As to quaternary structure, homotetramer.

The protein localises to the cytoplasm. It catalyses the reaction thymidine + ATP = dTMP + ADP + H(+). This is Thymidine kinase from Lactobacillus acidophilus (strain ATCC 700396 / NCK56 / N2 / NCFM).